The chain runs to 504 residues: Maturase K (504 aa).

The protein belongs to the intron maturase 2 family. MatK subfamily.

The protein resides in the plastid. Its subcellular location is the chloroplast. Its function is as follows. Usually encoded in the trnK tRNA gene intron. Probably assists in splicing its own and other chloroplast group II introns. The chain is Maturase K from Capsella bursa-pastoris (Shepherd's purse).